The sequence spans 447 residues: UPF0210 protein LAF_0976 (447 aa).

Belongs to the UPF0210 family. As to quaternary structure, homodimer.

In Limosilactobacillus fermentum (strain NBRC 3956 / LMG 18251) (Lactobacillus fermentum), this protein is UPF0210 protein LAF_0976.